A 295-amino-acid polypeptide reads, in one-letter code: Ribosomal protein L11 methyltransferase (295 aa).

S-adenosyl-L-methionine contacts are provided by Thr-145, Gly-166, Asp-188, and Asn-230.

It belongs to the methyltransferase superfamily. PrmA family.

It is found in the cytoplasm. The catalysed reaction is L-lysyl-[protein] + 3 S-adenosyl-L-methionine = N(6),N(6),N(6)-trimethyl-L-lysyl-[protein] + 3 S-adenosyl-L-homocysteine + 3 H(+). Functionally, methylates ribosomal protein L11. The protein is Ribosomal protein L11 methyltransferase of Pectobacterium atrosepticum (strain SCRI 1043 / ATCC BAA-672) (Erwinia carotovora subsp. atroseptica).